A 511-amino-acid chain; its full sequence is Exodeoxyribonuclease 7 large subunit (511 aa).

Belongs to the XseA family. In terms of assembly, heterooligomer composed of large and small subunits.

The protein localises to the cytoplasm. The catalysed reaction is Exonucleolytic cleavage in either 5'- to 3'- or 3'- to 5'-direction to yield nucleoside 5'-phosphates.. In terms of biological role, bidirectionally degrades single-stranded DNA into large acid-insoluble oligonucleotides, which are then degraded further into small acid-soluble oligonucleotides. This chain is Exodeoxyribonuclease 7 large subunit, found in Brucella suis biovar 1 (strain 1330).